The sequence spans 352 residues: Uroporphyrinogen decarboxylase (352 aa).

Substrate is bound by residues 27 to 31 (RQAGR), D77, Y154, T209, and H325.

This sequence belongs to the uroporphyrinogen decarboxylase family. Homodimer.

Its subcellular location is the cytoplasm. The catalysed reaction is uroporphyrinogen III + 4 H(+) = coproporphyrinogen III + 4 CO2. It participates in porphyrin-containing compound metabolism; protoporphyrin-IX biosynthesis; coproporphyrinogen-III from 5-aminolevulinate: step 4/4. Functionally, catalyzes the decarboxylation of four acetate groups of uroporphyrinogen-III to yield coproporphyrinogen-III. This chain is Uroporphyrinogen decarboxylase, found in Legionella pneumophila (strain Corby).